Here is a 570-residue protein sequence, read N- to C-terminus: High-affinity hexose transporter HXT7 (570 aa).

Topologically, residues 1–60 are cytoplasmic; sequence MSQDAAIAEQTPVEHLSAVDSASHSVLSTPSNKAERDEIKAYGEGEEHEPVVEIPKRPAS. A helical transmembrane segment spans residues 61 to 81; that stretch reads AYVTVSIMCIMIAFGGFVFGW. The Extracellular segment spans residues 82–116; that stretch reads DTGTISGFINQTDFIRRFGMKHKDGTNYLSKVRTG. N-linked (GlcNAc...) asparagine glycosylation is present at N91. A helical membrane pass occupies residues 117-137; the sequence is LIVSIFNIGCAIGGIILSKLG. Over 138 to 143 the chain is Cytoplasmic; it reads DMYGRK. Residues 144-164 traverse the membrane as a helical segment; the sequence is VGLIVVVVIYIIGIIIQIASI. Residues 165-174 are Extracellular-facing; that stretch reads NKWYQYFIGR. Residues 175–195 traverse the membrane as a helical segment; the sequence is IISGLGVGGIAVLSPMLISEV. The Cytoplasmic segment spans residues 196 to 201; it reads SPKHLR. A helical membrane pass occupies residues 202 to 222; it reads GTLVSCYQLMITAGIFLGYCT. At 223–236 the chain is on the extracellular side; sequence NFGTKNYSNSVQWR. A glycan (N-linked (GlcNAc...) asparagine) is linked at N228. Residues 237–257 traverse the membrane as a helical segment; the sequence is VPLGLCFAWALFMIGGMTFVP. Residues 258 to 340 are Cytoplasmic-facing; sequence ESPRYLAEVG…IQSLQQLTGD (83 aa). The helical transmembrane segment at 341-357 threads the bilayer; the sequence is NYFFYYGTTIFKAVGLS. Over 358 to 363 the chain is Extracellular; sequence DSFETS. The helical transmembrane segment at 364–381 threads the bilayer; the sequence is IVLGIVNFASTFVGIYVV. Residues 382–388 are Cytoplasmic-facing; that stretch reads ERYGRRT. Residues 389-409 form a helical membrane-spanning segment; it reads CLLWGAASMTACMVVYASVGV. The Extracellular segment spans residues 410–431; the sequence is TRLWPNGQDQPSSKGAGNCMIV. A helical transmembrane segment spans residues 432–452; it reads FACFYIFCFATTWAPIPYVVV. At 453 to 469 the chain is on the cytoplasmic side; sequence SETFPLRVKSKAMSIAT. A helical membrane pass occupies residues 470-490; that stretch reads AANWLWGFLIGFFTPFITGAI. Residue N491 is a topological domain, extracellular. A helical transmembrane segment spans residues 492 to 512; it reads FYYGYVFMGCLVFMFFYVLLV. At 513-570 the chain is on the cytoplasmic side; sequence VPETKGLTLEEVNTMWEEGVLPWKSASWVPPSRRGANYDAEEMTHDDKPLYKRMFSTK. T556 is modified (phosphothreonine). A Glycyl lysine isopeptide (Lys-Gly) (interchain with G-Cter in ubiquitin) cross-link involves residue K560.

It belongs to the major facilitator superfamily. Sugar transporter (TC 2.A.1.1) family.

The protein localises to the membrane. Functionally, high-affinity glucose transporter. This chain is High-affinity hexose transporter HXT7 (HXT7), found in Saccharomyces cerevisiae (strain ATCC 204508 / S288c) (Baker's yeast).